The following is a 1000-amino-acid chain: UPF0182 protein SCO5204 (1000 aa).

The next 7 membrane-spanning stretches (helical) occupy residues 26–48, 70–92, 121–143, 177–199, 220–237, 267–289, and 296–318; these read LLLT…GFWT, IGLF…WLAH, WLLL…GQWR, FLLG…THYL, LSVL…AYWL, LPAK…ATLW, and PVIG…PALV. Disordered stretches follow at residues 884-908 and 943-1000; these read AETE…NPTV and EALQ…ADTG. Positions 888–897 are enriched in acidic residues; it reads QPPDEGDDTT. Basic and acidic residues-rich tracts occupy residues 943 to 953 and 963 to 984; these read EALQRAEDAQA and NGDD…DKAG.

This sequence belongs to the UPF0182 family.

The protein resides in the cell membrane. This is UPF0182 protein SCO5204 from Streptomyces coelicolor (strain ATCC BAA-471 / A3(2) / M145).